A 325-amino-acid chain; its full sequence is 8-oxo-dGDP phosphatase NUDT18 (325 aa).

The Nudix hydrolase domain occupies 38–163 (NVCYIVGAVI…DILSLIDAGL (126 aa)). L55 is a binding site for Mg(2+). The Nudix box motif lies at 73–94 (GRMEECESILEALQREVREEAG).

Belongs to the Nudix hydrolase family. Mn(2+) is required as a cofactor. Requires Mg(2+) as cofactor.

The catalysed reaction is 8-oxo-dGDP + H2O = 8-oxo-dGMP + phosphate + H(+). The enzyme catalyses 8-oxo-dADP + H2O = 8-oxo-dAMP + phosphate + H(+). It carries out the reaction 2-oxo-dADP + H2O = 2-oxo-dAMP + phosphate + H(+). It catalyses the reaction 8-oxo-GDP + H2O = 8-oxo-GMP + phosphate + H(+). Mediates the hydrolysis of oxidized nucleoside diphosphate derivatives. Hydrolyzes 8-oxo-7,8-dihydroguanine (8-oxo-Gua)-containing deoxyribo- and ribonucleoside diphosphates to the monophosphates. Hydrolyzes 8-oxo-dGDP and 8-oxo-GDP with the same efficiencies. Also hydrolyzes 8-OH-dADP and 2-OH-dADP. Exhibited no or minimal hydrolysis activity against 8-oxo-dGTP, 8-oxo-GTP, dGTP, GTP, dGDP and GDP. Probably removes oxidized guanine nucleotides from both the DNA and RNA precursor pools. The sequence is that of 8-oxo-dGDP phosphatase NUDT18 (nudt18) from Danio rerio (Zebrafish).